The chain runs to 213 residues: LexA repressor (213 aa).

The H-T-H motif DNA-binding region spans 29-49 (RAEIAQALGFRSPNAAEDHLK). Active-site for autocatalytic cleavage activity residues include Ser-131 and Lys-168.

The protein belongs to the peptidase S24 family. Homodimer.

It carries out the reaction Hydrolysis of Ala-|-Gly bond in repressor LexA.. Its function is as follows. Represses a number of genes involved in the response to DNA damage (SOS response), including recA and lexA. In the presence of single-stranded DNA, RecA interacts with LexA causing an autocatalytic cleavage which disrupts the DNA-binding part of LexA, leading to derepression of the SOS regulon and eventually DNA repair. This is LexA repressor from Bordetella avium (strain 197N).